The following is a 394-amino-acid chain: Flagellin A (394 aa).

It belongs to the bacterial flagellin family.

Its subcellular location is the secreted. The protein resides in the bacterial flagellum. Flagellin is the subunit protein which polymerizes to form the filaments of bacterial flagella. Homomer of FlaA is able to form a functional filament. The sequence is that of Flagellin A (flaA) from Rhizobium meliloti (strain 1021) (Ensifer meliloti).